Here is a 124-residue protein sequence, read N- to C-terminus: UPF0538 protein (124 aa).

The protein belongs to the UPF0538 family.

The polypeptide is UPF0538 protein (Dictyostelium discoideum (Social amoeba)).